Reading from the N-terminus, the 87-residue chain is Small ribosomal subunit protein bS20 (87 aa).

This sequence belongs to the bacterial ribosomal protein bS20 family.

Functionally, binds directly to 16S ribosomal RNA. The polypeptide is Small ribosomal subunit protein bS20 (Finegoldia magna (strain ATCC 29328 / DSM 20472 / WAL 2508) (Peptostreptococcus magnus)).